The following is an 843-amino-acid chain: Aconitase AMT8-2 (843 aa).

A substrate-binding site is contributed by 258 to 260 (DSH). Positions 450, 513, and 516 each coordinate [4Fe-4S] cluster. Substrate-binding positions include Arg536, Arg541, and 712–713 (SR).

This sequence belongs to the aconitase/IPM isomerase family.

The protein operates within mycotoxin biosynthesis. Functionally, aconitase; part of the gene clusters that mediate the biosynthesis of AM-toxins, host-selective toxins (HSTs) causing Alternaria blotch on apple, a worldwide distributed disease. AM-toxins are cyclic depsipeptides containing the 3 residues 2-hydroxy-isovaleric acid (2-HIV), dehydroalanine, L-alanine which are common for all 3 AM-toxins I to III. The fourth precursor is L-alpha-amino-methoxyphenyl-valeric acid (L-Amv) for AM-toxin I, L-alpha-amino-phenyl-valeric acid (L-Apv) for AM-toxin II, and L-alpha-amino-hydroxyphenyl-valeric acid (L-Ahv) for AM-toxin III. AM-toxins have two target sites for affecting susceptible apple cells; they cause invagination of the plasma membrane and electrolyte loss and chloroplast disorganization. The non-ribosomal peptide synthetase AMT1 contains 4 catalytic modules and is responsible for activation of each residue in AM-toxin. The aldo-keto reductase AMT2 catalyzes the conversion of 2-keto-isovaleric acid (2-KIV) to 2-hydroxy-isovaleric acid (2-HIV), one of the precursor residues incorporated by AMT1 during AM-toxin biosynthesis, by reduction of its ketone to an alcohol. The cytochrome P450 monooxygenase AMT3 and the thioesterase AMT4 are also important for AM-toxin production, but their exact function within the AM-toxin biosynthesis are not known yet. Up to 21 proteins (including AMT1 to AMT4) are predicted to be involved in AM-toxin biosynthesis since their expression ishighly up-regulated in AM-toxin-producing cultures. The sequence is that of Aconitase AMT8-2 from Alternaria alternata (Alternaria rot fungus).